Here is a 168-residue protein sequence, read N- to C-terminus: Sperm acrosome-associated protein 9 (168 aa).

In terms of assembly, microtubule inner protein component of sperm flagellar doublet microtubules. Interacts with CABP1 and CALR. Interacts with INCA1. Interacts with microtubules. Testis-specific. Expressed in round spermatids.

The protein resides in the cytoplasm. It localises to the cytoplasmic vesicle. It is found in the secretory vesicle. The protein localises to the acrosome. Its subcellular location is the cytoskeleton. The protein resides in the cilium basal body. It localises to the flagellum axoneme. It is found in the cilium axoneme. The protein localises to the nucleus. In terms of biological role, microtubule inner protein (MIP) part of the dynein-decorated doublet microtubules (DMTs) of multiciliated respiratory cells and the distal singlet microtubules of monoflagellated spermatozoa. Forms an extensive interaction network cross-linking the lumen of axonemal doublet microtubules. The polypeptide is Sperm acrosome-associated protein 9 (Spaca9) (Rattus norvegicus (Rat)).